The chain runs to 179 residues: Transcription factor NF-E4 (179 aa).

K43 bears the N6-acetyllysine mark. Residues 100–179 (AMKATGPHNA…QLPSLHLSQG (80 aa)) form a disordered region. Polar residues-rich tracts occupy residues 143–153 (LSQSNPPTRIS) and 163–179 (ALEQ…LSQG).

In terms of assembly, component of the SSP (stage selector protein) complex, which appears to be a heteromer of TFCP2 and 2 copies of NFE4. Interacts with HDAC1 and PCAF. Isoform 2 interacts with TFCP2. Post-translationally, acetylation at Lys-43 prolongs the protein half-life by preventing ubiquitin-mediated degradation and reduces the interaction between NF-E4 and HDAC1, potentially maximizing the activating ability of the factor at the gamma-promoter. In terms of processing, ubiquitinated; leading to its degradation by the proteasome. Acetylation at Lys-43 prevents ubiquitination. As to expression, specifically expressed in fetal liver, cord blood and bone marrow. Also expressed in the K562 and HEL cell lines, which constitutively express the fetal globin genes.

The protein localises to the nucleus. In terms of biological role, functions as part of the SSP (stage selector protein) complex, a complex that contributes to the preferential expression of the gamma-gene in fetal erythroid cells by facilitating the interaction of the gamma-globin genes with enhancer elements contained in the locus control region (LCR). The complex binds to the stage selector element (SSE) in the proximal gamma-globin promoter. In contrast, isoform 2 acts as a repressor of gamma-globin gene expression by preventing NFE2 and RNA polymerase II recruitment to the promoter. The protein is Transcription factor NF-E4 (NFE4) of Homo sapiens (Human).